The sequence spans 236 residues: 2-C-methyl-D-erythritol 4-phosphate cytidylyltransferase (236 aa).

Belongs to the IspD/TarI cytidylyltransferase family. IspD subfamily.

It carries out the reaction 2-C-methyl-D-erythritol 4-phosphate + CTP + H(+) = 4-CDP-2-C-methyl-D-erythritol + diphosphate. Its pathway is isoprenoid biosynthesis; isopentenyl diphosphate biosynthesis via DXP pathway; isopentenyl diphosphate from 1-deoxy-D-xylulose 5-phosphate: step 2/6. Its function is as follows. Catalyzes the formation of 4-diphosphocytidyl-2-C-methyl-D-erythritol from CTP and 2-C-methyl-D-erythritol 4-phosphate (MEP). The chain is 2-C-methyl-D-erythritol 4-phosphate cytidylyltransferase from Paraburkholderia phymatum (strain DSM 17167 / CIP 108236 / LMG 21445 / STM815) (Burkholderia phymatum).